Reading from the N-terminus, the 576-residue chain is Lysine--tRNA ligase (576 aa).

Mg(2+)-binding residues include glutamate 412 and glutamate 419.

This sequence belongs to the class-II aminoacyl-tRNA synthetase family. Homodimer. Mg(2+) serves as cofactor.

Its subcellular location is the cytoplasm. The enzyme catalyses tRNA(Lys) + L-lysine + ATP = L-lysyl-tRNA(Lys) + AMP + diphosphate. This chain is Lysine--tRNA ligase, found in Parabacteroides distasonis (strain ATCC 8503 / DSM 20701 / CIP 104284 / JCM 5825 / NCTC 11152).